A 711-amino-acid polypeptide reads, in one-letter code: DNA topoisomerase 3 (711 aa).

Residues 2–135 form the Toprim domain; the sequence is KSLILAEKPS…IRRLWISSVT (134 aa). Mg(2+) contacts are provided by Glu8 and Asp104. The Topo IA-type catalytic domain occupies 152–580; that stretch reads YNDLYYAALA…EMKDFTKDVV (429 aa). An interaction with DNA region spans residues 186-191; sequence SLGRVQ. Residue Tyr305 is the O-(5'-phospho-DNA)-tyrosine intermediate of the active site. The interval 691-711 is disordered; sequence MNKNEGLDNNPFKDALKNLNL.

It belongs to the type IA topoisomerase family. Mg(2+) is required as a cofactor.

The catalysed reaction is ATP-independent breakage of single-stranded DNA, followed by passage and rejoining.. Functionally, releases the supercoiling and torsional tension of DNA, which is introduced during the DNA replication and transcription, by transiently cleaving and rejoining one strand of the DNA duplex. Introduces a single-strand break via transesterification at a target site in duplex DNA. The scissile phosphodiester is attacked by the catalytic tyrosine of the enzyme, resulting in the formation of a DNA-(5'-phosphotyrosyl)-enzyme intermediate and the expulsion of a 3'-OH DNA strand. The free DNA strand then undergoes passage around the unbroken strand, thus removing DNA supercoils. Finally, in the religation step, the DNA 3'-OH attacks the covalent intermediate to expel the active-site tyrosine and restore the DNA phosphodiester backbone. This is DNA topoisomerase 3 from Staphylococcus aureus (strain NCTC 8325 / PS 47).